A 24-amino-acid chain; its full sequence is Attacin (24 aa).

The protein belongs to the attacin/sarcotoxin-2 family.

The protein resides in the secreted. Functionally, hemolymph antibacterial protein. The polypeptide is Attacin (Heliothis virescens (Tobacco budworm moth)).